Reading from the N-terminus, the 437-residue chain is Succinyl-CoA:cyclohexane-1-carboxylate CoA transferase (437 aa).

Residue 221 to 225 (GWGGI) participates in CoA binding. The active-site 5-glutamyl coenzyme A thioester intermediate is Glu244. The CoA site is built by Leu319, Gly342, and Lys367.

It belongs to the acetyl-CoA hydrolase/transferase family. Homodimer.

The enzyme catalyses cyclohexane-1-carboxylate + succinyl-CoA = cyclohexane-1-carbonyl-CoA + succinate. It catalyses the reaction cyclohexane-1-carboxylate + butanoyl-CoA = cyclohexane-1-carbonyl-CoA + butanoate. In terms of biological role, acyl-CoA transferase involved in the anaerobic degradation of cyclohexane carboxylic acid (CHC). Catalyzes the activation of CHC to cyclohexane-1-carbonyl-CoA (CHCoA). Benzoic acid and cyclohex-1-ene-1-carboxylic acid can also be used as substrates, but with lower specific activity. Shows highest activity with succinyl-CoA and butanoyl-coA as a CoA donor, and lower activity with crotonyl-CoA, acetyl-CoA, glutaryl-CoA, CH1eneCoA, propionyl-CoA and acetoacetyl-CoA. In vitro, the enzyme can use butanoyl-coA as a CoA donor with greater efficiency than succinyl-CoA. However, succinyl-CoA is the most abundant CoA ester in exponentially grown cells, whereas butanoyl-coA is hardly detectable, indicating that succinyl-CoA is the natural CoA donor for CHC activation. This is Succinyl-CoA:cyclohexane-1-carboxylate CoA transferase from Geobacter metallireducens (strain ATCC 53774 / DSM 7210 / GS-15).